A 1197-amino-acid chain; its full sequence is DExH-box ATP-dependent RNA helicase DExH3 (1197 aa).

One can recognise a Helicase ATP-binding domain in the interval 309-476 (LKAIAANQVV…FGGAPAMHIP (168 aa)). 322-329 (GETGCGKT) serves as a coordination point for ATP. The DEIH box signature appears at 423-426 (DEIH). The region spanning 564 to 738 (LIENVLCHIV…SLCLQIKSLG (175 aa)) is the Helicase C-terminal domain.

This sequence belongs to the DExH box helicase family.

It carries out the reaction ATP + H2O = ADP + phosphate + H(+). In Arabidopsis thaliana (Mouse-ear cress), this protein is DExH-box ATP-dependent RNA helicase DExH3.